The primary structure comprises 89 residues: Small ribosomal subunit protein uS15 (89 aa).

The protein belongs to the universal ribosomal protein uS15 family. In terms of assembly, part of the 30S ribosomal subunit. Forms a bridge to the 50S subunit in the 70S ribosome, contacting the 23S rRNA.

Functionally, one of the primary rRNA binding proteins, it binds directly to 16S rRNA where it helps nucleate assembly of the platform of the 30S subunit by binding and bridging several RNA helices of the 16S rRNA. Its function is as follows. Forms an intersubunit bridge (bridge B4) with the 23S rRNA of the 50S subunit in the ribosome. In Streptococcus gordonii (strain Challis / ATCC 35105 / BCRC 15272 / CH1 / DL1 / V288), this protein is Small ribosomal subunit protein uS15.